A 439-amino-acid chain; its full sequence is N5-carboxyaminoimidazole ribonucleotide synthase (439 aa).

ATP-binding positions include Lys-113, Lys-160, 197-200, Glu-205, and 283-284; these read EERV and NE. The ATP-grasp domain occupies 117–313; that stretch reads RRRLAALGAA…QFEQHLRAVL (197 aa).

This sequence belongs to the PurK/PurT family. In terms of assembly, homodimer.

It carries out the reaction 5-amino-1-(5-phospho-beta-D-ribosyl)imidazole + hydrogencarbonate + ATP = 5-carboxyamino-1-(5-phospho-D-ribosyl)imidazole + ADP + phosphate + 2 H(+). Its pathway is purine metabolism; IMP biosynthesis via de novo pathway; 5-amino-1-(5-phospho-D-ribosyl)imidazole-4-carboxylate from 5-amino-1-(5-phospho-D-ribosyl)imidazole (N5-CAIR route): step 1/2. Its function is as follows. Catalyzes the ATP-dependent conversion of 5-aminoimidazole ribonucleotide (AIR) and HCO(3)(-) to N5-carboxyaminoimidazole ribonucleotide (N5-CAIR). This is N5-carboxyaminoimidazole ribonucleotide synthase from Mycobacterium leprae (strain TN).